Here is a 218-residue protein sequence, read N- to C-terminus: UPF0502 protein Mmwyl1_3509 (218 aa).

Belongs to the UPF0502 family.

This chain is UPF0502 protein Mmwyl1_3509, found in Marinomonas sp. (strain MWYL1).